The primary structure comprises 373 residues: 4-hydroxy-3-methylbut-2-en-1-yl diphosphate synthase (flavodoxin) (373 aa).

Residues Cys-270, Cys-273, Cys-305, and Glu-312 each coordinate [4Fe-4S] cluster.

It belongs to the IspG family. [4Fe-4S] cluster serves as cofactor.

It carries out the reaction (2E)-4-hydroxy-3-methylbut-2-enyl diphosphate + oxidized [flavodoxin] + H2O + 2 H(+) = 2-C-methyl-D-erythritol 2,4-cyclic diphosphate + reduced [flavodoxin]. It functions in the pathway isoprenoid biosynthesis; isopentenyl diphosphate biosynthesis via DXP pathway; isopentenyl diphosphate from 1-deoxy-D-xylulose 5-phosphate: step 5/6. Converts 2C-methyl-D-erythritol 2,4-cyclodiphosphate (ME-2,4cPP) into 1-hydroxy-2-methyl-2-(E)-butenyl 4-diphosphate. This is 4-hydroxy-3-methylbut-2-en-1-yl diphosphate synthase (flavodoxin) from Klebsiella pneumoniae subsp. pneumoniae (strain ATCC 700721 / MGH 78578).